The following is a 1187-amino-acid chain: Disease resistance protein TAO1 (1187 aa).

The TIR domain occupies 38-202 (WLHPVFLSFR…KISKDVSDVL (165 aa)). Residue Glu-113 is part of the active site. Residues 217–478 (EAHTTEITSL…FFRRERIETL (262 aa)) enclose the NB-ARC domain. LRR repeat units follow at residues 498-522 (DKSL…GLDI), 611-633 (SRKL…KFNP), 635-658 (FLVK…PIRN), 660-679 (KWMD…FSTA), 680-703 (TNLQ…IGNA), 704-727 (TNLL…IGNL), 728-750 (TNLK…SFGN), 752-775 (TSLK…IGNI), 799-823 (NTNL…MLNL), 824-849 (TRLE…VINL), 870-894 (ATNL…IWNI), 895-918 (TNLQ…VENA), 920-942 (NLQS…IWRI), and 953-974 (CSSL…LILD).

It carries out the reaction NAD(+) + H2O = ADP-D-ribose + nicotinamide + H(+). Functionally, TIR-NB-LRR receptor-like protein that contributes to disease resistance induced by the Pseudomonas syringae type III effector AvrB. Acts additively with RPM1 to generate a full disease resistance response to P.syringae expressing this type III effector. The polypeptide is Disease resistance protein TAO1 (Arabidopsis thaliana (Mouse-ear cress)).